The following is a 474-amino-acid chain: Cyclin-dependent kinase 18 (474 aa).

6 positions are modified to phosphoserine: serine 14, serine 74, serine 89, serine 98, serine 117, and serine 132. The segment at 44–93 (NLQLGPLGRDPPQECSTFSPTDSGEEPGQLSPGVQFQRRQNQRRFSMEDV) is disordered. In terms of domain architecture, Protein kinase spans 144 to 425 (YVKLDKLGEG…AEAALSHSYF (282 aa)). Residues 150–158 (LGEGTYATV) and lysine 173 each bind ATP. The active-site Proton acceptor is aspartate 265. Phosphoserine occurs at positions 440 and 443.

It belongs to the protein kinase superfamily. CMGC Ser/Thr protein kinase family. CDC2/CDKX subfamily. Isoform 2 expression is limited to several subcortical nuclei of the basal gangli and the spinal cord. Isoform 1 is widely expressed.

The catalysed reaction is L-seryl-[protein] + ATP = O-phospho-L-seryl-[protein] + ADP + H(+). The enzyme catalyses L-threonyl-[protein] + ATP = O-phospho-L-threonyl-[protein] + ADP + H(+). Its function is as follows. May play a role in signal transduction cascades in terminally differentiated cells. The polypeptide is Cyclin-dependent kinase 18 (CDK18) (Homo sapiens (Human)).